Reading from the N-terminus, the 311-residue chain is Putative HTH-type transcriptional regulatory protein PTO0557 (311 aa).

One can recognise an HTH cro/C1-type domain in the interval 132–186 (MRRIRELKGYSVGYLSSKLGISRRSISLYESGSSATIDIYLKLEETLGEDLTKDI). Positions 143-162 (VGYLSSKLGISRRSISLYES) form a DNA-binding region, H-T-H motif.

The sequence is that of Putative HTH-type transcriptional regulatory protein PTO0557 from Picrophilus torridus (strain ATCC 700027 / DSM 9790 / JCM 10055 / NBRC 100828 / KAW 2/3).